The following is a 189-amino-acid chain: uncharacterized protein (189 aa).

The first 23 residues, 1–23 (MIKTTPHKIVILMGILLSPSVFA), serve as a signal peptide directing secretion. Residues 104–125 (SSPKLIIPQSGDSSSTTSNIGM) are disordered. A compositionally biased stretch (polar residues) spans 113–123 (SGDSSSTTSNI).

It belongs to the fimbrial protein family.

Its subcellular location is the fimbrium. In terms of biological role, part of the yadCKLM-htrE-yadVN fimbrial operon. Could contribute to adhesion to various surfaces in specific environmental niches. This is an uncharacterized protein from Escherichia coli (strain K12).